The following is a 741-amino-acid chain: Eukaryotic translation initiation factor 3 subunit B (741 aa).

Residues 1–10 (MAPSFDTLSE) are compositionally biased toward polar residues. The tract at residues 1–21 (MAPSFDTLSEQDLHEEEEEEI) is disordered. An RRM domain is found at 40 to 126 (TFIVIDGLPI…HTLAVNKLMD (87 aa)). WD repeat units follow at residues 193 to 230 (AHWT…KQKQ), 232 to 289 (PHPF…RSFV), 303 to 344 (APKK…LLGK), 514 to 557 (IEKK…EKAE), and 572 to 610 (VEHY…HTFA). The disordered stretch occupies residues 696 to 723 (DAYGIPEDADDAKVAKDAPPVSEDQGEA).

The protein belongs to the eIF-3 subunit B family. As to quaternary structure, component of the eukaryotic translation initiation factor 3 (eIF-3) complex.

The protein localises to the cytoplasm. RNA-binding component of the eukaryotic translation initiation factor 3 (eIF-3) complex, which is involved in protein synthesis of a specialized repertoire of mRNAs and, together with other initiation factors, stimulates binding of mRNA and methionyl-tRNAi to the 40S ribosome. The eIF-3 complex specifically targets and initiates translation of a subset of mRNAs involved in cell proliferation. This is Eukaryotic translation initiation factor 3 subunit B (prt1) from Aspergillus oryzae (strain ATCC 42149 / RIB 40) (Yellow koji mold).